A 95-amino-acid chain; its full sequence is Corticostatin-3 (95 aa).

Positions 1–19 (MRTLALLAAILLVALQAQA) are cleaved as a signal peptide. The propeptide occupies 20-62 (EHVSVSIDEVVDQQPPQAEDQDVAIYVKEHESSALEALGVKAG). Cystine bridges form between C65-C93, C67-C82, and C72-C92.

The protein belongs to the alpha-defensin family.

Its subcellular location is the secreted. In terms of biological role, this peptide has antibiotic, anti-fungi and antiviral activity. It also inhibits corticotropin (ACTH) stimulated corticosterone production. This Oryctolagus cuniculus (Rabbit) protein is Corticostatin-3.